The primary structure comprises 249 residues: 2,3,4,5-tetrahydropyridine-2,6-dicarboxylate N-acetyltransferase (249 aa).

Belongs to the transferase hexapeptide repeat family. DapH subfamily.

The enzyme catalyses (S)-2,3,4,5-tetrahydrodipicolinate + acetyl-CoA + H2O = L-2-acetamido-6-oxoheptanedioate + CoA. It participates in amino-acid biosynthesis; L-lysine biosynthesis via DAP pathway; LL-2,6-diaminopimelate from (S)-tetrahydrodipicolinate (acetylase route): step 1/3. Catalyzes the transfer of an acetyl group from acetyl-CoA to tetrahydrodipicolinate. The sequence is that of 2,3,4,5-tetrahydropyridine-2,6-dicarboxylate N-acetyltransferase from Fervidobacterium nodosum (strain ATCC 35602 / DSM 5306 / Rt17-B1).